The chain runs to 481 residues: ATP synthase subunit beta (481 aa).

167 to 174 is a binding site for ATP; that stretch reads GGAGVGKT.

This sequence belongs to the ATPase alpha/beta chains family. As to quaternary structure, F-type ATPases have 2 components, CF(1) - the catalytic core - and CF(0) - the membrane proton channel. CF(1) has five subunits: alpha(3), beta(3), gamma(1), delta(1), epsilon(1). CF(0) has three main subunits: a(1), b(2) and c(9-12). The alpha and beta chains form an alternating ring which encloses part of the gamma chain. CF(1) is attached to CF(0) by a central stalk formed by the gamma and epsilon chains, while a peripheral stalk is formed by the delta and b chains.

Its subcellular location is the cell membrane. The catalysed reaction is ATP + H2O + 4 H(+)(in) = ADP + phosphate + 5 H(+)(out). Its function is as follows. Produces ATP from ADP in the presence of a proton gradient across the membrane. The catalytic sites are hosted primarily by the beta subunits. This chain is ATP synthase subunit beta, found in Corynebacterium efficiens (strain DSM 44549 / YS-314 / AJ 12310 / JCM 11189 / NBRC 100395).